Here is a 547-residue protein sequence, read N- to C-terminus: Glutamyl-tRNA(Gln) amidotransferase subunit B, mitochondrial (547 aa).

The protein belongs to the GatB/GatE family. GatB subfamily. As to quaternary structure, subunit of the heterotrimeric GatFAB amidotransferase (AdT) complex, composed of A, B and F subunits.

The protein localises to the mitochondrion. The catalysed reaction is L-glutamyl-tRNA(Gln) + L-glutamine + ATP + H2O = L-glutaminyl-tRNA(Gln) + L-glutamate + ADP + phosphate + H(+). Its function is as follows. Allows the formation of correctly charged Gln-tRNA(Gln) through the transamidation of misacylated Glu-tRNA(Gln) in the mitochondria. The reaction takes place in the presence of glutamine and ATP through an activated gamma-phospho-Glu-tRNA(Gln). The sequence is that of Glutamyl-tRNA(Gln) amidotransferase subunit B, mitochondrial from Lachancea thermotolerans (strain ATCC 56472 / CBS 6340 / NRRL Y-8284) (Yeast).